Here is a 508-residue protein sequence, read N- to C-terminus: DASH complex subunit ASK1 (508 aa).

Disordered stretches follow at residues 86–138 (LVDG…TLSS) and 150–355 (SRAA…QLRS). Over residues 116 to 138 (EPSQYTPRPQTSAGGHDTTTLSS) the composition is skewed to polar residues. Basic and acidic residues predominate over residues 161 to 175 (QHHDDSSVLTDRDGD). Residues 201–213 (DEMDIDMDEEDSE) are compositionally biased toward acidic residues. Basic and acidic residues predominate over residues 229-238 (RYYDDDHGFE). Acidic residues predominate over residues 239–258 (QGEEEEDEEEEEEEEEEEEG). Basic and acidic residues predominate over residues 326–338 (IKQEDTEKKRPLW).

Belongs to the DASH complex ASK1 family. Component of the DASH complex consisting of ASK1, DAD1, DAD2, DAD3, DAD4, DAM1, DUO1, HSK3, SPC19 and SPC34, with a stoichiometry of one copy of each subunit per complex. Multiple DASH complexes oligomerize to form a ring that encircles spindle microtubules and organizes the rod-like NDC80 complexes of the outer kinetochore. On cytoplasmic microtubules, DASH complexes appear to form patches instead of rings.

It localises to the chromosome. The protein resides in the centromere. The protein localises to the kinetochore. It is found in the cytoplasm. Its subcellular location is the cytoskeleton. It localises to the spindle. The protein resides in the nucleus. Its function is as follows. Component of the DASH complex that connects microtubules with kinetochores and couples microtubule depolymerisation to chromosome movement; it is involved in retrieving kinetochores to the spindle poles before their re-orientation on the spindle in early mitosis and allows microtubule depolymerization to pull chromosomes apart and resist detachment during anaphase. Kinetochores, consisting of a centromere-associated inner segment and a microtubule-contacting outer segment, play a crucial role in chromosome segregation by mediating the physical connection between centromeric DNA and microtubules. Kinetochores also serve as an input point for the spindle assembly checkpoint, which delays anaphase until all chromosomes have bioriented on the mitotic spindle. The sequence is that of DASH complex subunit ASK1 from Chaetomium thermophilum (strain DSM 1495 / CBS 144.50 / IMI 039719) (Thermochaetoides thermophila).